The primary structure comprises 433 residues: Tol-Pal system protein TolB (433 aa).

An N-terminal signal peptide occupies residues 1 to 26 (MNKLRLFRSFFAFLLPFGMATGAAHG).

Belongs to the TolB family. In terms of assembly, the Tol-Pal system is composed of five core proteins: the inner membrane proteins TolA, TolQ and TolR, the periplasmic protein TolB and the outer membrane protein Pal. They form a network linking the inner and outer membranes and the peptidoglycan layer.

It is found in the periplasm. Functionally, part of the Tol-Pal system, which plays a role in outer membrane invagination during cell division and is important for maintaining outer membrane integrity. The polypeptide is Tol-Pal system protein TolB (Methylobacillus flagellatus (strain ATCC 51484 / DSM 6875 / VKM B-1610 / KT)).